Consider the following 217-residue polypeptide: tRNA (guanine-N(7)-)-methyltransferase (217 aa).

Positions 48, 73, 100, and 123 each coordinate S-adenosyl-L-methionine. Aspartate 123 is a catalytic residue. 2 residues coordinate substrate: lysine 127 and aspartate 159.

This sequence belongs to the class I-like SAM-binding methyltransferase superfamily. TrmB family.

The catalysed reaction is guanosine(46) in tRNA + S-adenosyl-L-methionine = N(7)-methylguanosine(46) in tRNA + S-adenosyl-L-homocysteine. Its pathway is tRNA modification; N(7)-methylguanine-tRNA biosynthesis. Catalyzes the formation of N(7)-methylguanine at position 46 (m7G46) in tRNA. The sequence is that of tRNA (guanine-N(7)-)-methyltransferase from Leptospira interrogans serogroup Icterohaemorrhagiae serovar copenhageni (strain Fiocruz L1-130).